A 3380-amino-acid chain; its full sequence is Apolipophorins (3380 aa).

The signal sequence occupies residues 1–21; that stretch reads MGTPPHIWFLLILAISSGGLS. The region spanning 40-646 is the Vitellogenin domain; the sequence is YQKGQTYTYS…SQSSYLPRSV (607 aa). N-linked (GlcNAc...) asparagine glycosylation is found at asparagine 132, asparagine 649, asparagine 969, asparagine 2174, asparagine 2851, and asparagine 3177. In terms of domain architecture, VWFD spans 2815–2979; sequence ATAILLNSHH…NAWKVDAQCA (165 aa). Residues cysteine 2839 and cysteine 2978 are joined by a disulfide bond.

Cleaved into 2 chains by furin protease. However, prevention of cleavage does not impair its function. In terms of processing, N-glycosylated. As to expression, present in brain, hemolymph, fat body and eyes.

The protein localises to the secreted. In terms of biological role, constitutes the major component of lipophorin, which mediates transport for various types of lipids in hemolymph. Acts by forming lipoprotein particles that bind lipoproteins and lipids. May be required for morphogens wingless (wg) and hedgehog (hh) function, possibly by acting as vehicles for the movement of wg and hh. This is Apolipophorins from Locusta migratoria (Migratory locust).